The chain runs to 176 residues: Isopentenyl-diphosphate Delta-isomerase (176 aa).

The Mn(2+) site is built by His22 and His28. In terms of domain architecture, Nudix hydrolase spans 26-160 (LRHKAVSVFV…PERYTPWLRI (135 aa)). The active site involves Cys62. A Mn(2+)-binding site is contributed by His64. Residue Glu82 coordinates Mg(2+). Residues Glu108 and Glu110 each contribute to the Mn(2+) site. Glu110 is an active-site residue.

This sequence belongs to the IPP isomerase type 1 family. The cofactor is Mg(2+). It depends on Mn(2+) as a cofactor.

It localises to the cytoplasm. The catalysed reaction is isopentenyl diphosphate = dimethylallyl diphosphate. Its pathway is isoprenoid biosynthesis; dimethylallyl diphosphate biosynthesis; dimethylallyl diphosphate from isopentenyl diphosphate: step 1/1. The protein operates within porphyrin-containing compound metabolism; chlorophyll biosynthesis. Its function is as follows. Catalyzes the 1,3-allylic rearrangement of the homoallylic substrate isopentenyl (IPP) to its highly electrophilic allylic isomer, dimethylallyl diphosphate (DMAPP). In Dinoroseobacter shibae (strain DSM 16493 / NCIMB 14021 / DFL 12), this protein is Isopentenyl-diphosphate Delta-isomerase.